The sequence spans 196 residues: Cell division protein SepF (196 aa).

A disordered region spans residues Val15–Lys80. The span at Arg56–Ser79 shows a compositional bias: polar residues.

It belongs to the SepF family. As to quaternary structure, homodimer. Interacts with FtsZ.

The protein localises to the cytoplasm. In terms of biological role, cell division protein that is part of the divisome complex and is recruited early to the Z-ring. Probably stimulates Z-ring formation, perhaps through the cross-linking of FtsZ protofilaments. Its function overlaps with FtsA. The sequence is that of Cell division protein SepF from Lactococcus lactis subsp. cremoris (strain SK11).